The primary structure comprises 1265 residues: Kinesin-related protein 13 (1265 aa).

A Kinesin motor domain is found at 23-350 (NIQAFVRVRP…LEYALKAKNI (328 aa)). Position 106 to 113 (106 to 113 (GQTGTGKT)) interacts with ATP. Residues 331–459 (LVNLEETINT…KQQQEKQKFI (129 aa)) are a coiled coil. Disordered regions lie at residues 918 to 1026 (KSGE…QPLI), 1085 to 1119 (SLVNESPFSSPKLSKQKILQDQIQPPQPPSILSQL), 1127 to 1146 (LQPQQPQQQPPSFFNNLNGS), 1158 to 1214 (LLDD…NQSL), and 1245 to 1265 (FGGGSTISSKLKSLKQQTPLK). A compositionally biased stretch (low complexity) spans 930 to 951 (IPSPISTSSSSSSSSSISSIHS). 3 stretches are compositionally biased toward polar residues: residues 960–980 (HQSINNSIKSNNFDGSKSINC), 1003–1026 (LNLNSTPKSVSKNLKSSQQQQPLI), and 1085–1097 (SLVNESPFSSPKL). Composition is skewed to low complexity over residues 1100–1119 (QKILQDQIQPPQPPSILSQL) and 1128–1146 (QPQQPQQQPPSFFNNLNGS). Residues 1158-1169 (LLDDDSDSDNSD) are compositionally biased toward acidic residues. Low complexity predominate over residues 1174–1195 (SLLSSNKKSSRASKNAVVSKKV). The segment covering 1250–1265 (TISSKLKSLKQQTPLK) has biased composition (polar residues).

This sequence belongs to the TRAFAC class myosin-kinesin ATPase superfamily. Kinesin family. BimC subfamily.

The protein resides in the cytoplasm. The protein localises to the cytoskeleton. Functionally, microtubule-associated force-producing protein that plays a role in organelle transport. Its motor activity is directed toward the microtubule's plus end. Cooperates with dynein to control the spindle elongation rate, but is dispensable for mitosis. In Dictyostelium discoideum (Social amoeba), this protein is Kinesin-related protein 13 (kif13).